A 1403-amino-acid chain; its full sequence is DNA-directed RNA polymerase subunit beta' (1403 aa).

Residues C69, C71, C84, and C87 each coordinate Zn(2+). D461, D463, and D465 together coordinate Mg(2+). C818, C891, C898, and C901 together coordinate Zn(2+). The tract at residues 1384–1403 (LELLRNEGEDETGNEELVAE) is disordered. The span at 1391–1403 (GEDETGNEELVAE) shows a compositional bias: acidic residues.

Belongs to the RNA polymerase beta' chain family. In terms of assembly, the RNAP catalytic core consists of 2 alpha, 1 beta, 1 beta' and 1 omega subunit. When a sigma factor is associated with the core the holoenzyme is formed, which can initiate transcription. Requires Mg(2+) as cofactor. Zn(2+) is required as a cofactor.

The catalysed reaction is RNA(n) + a ribonucleoside 5'-triphosphate = RNA(n+1) + diphosphate. Functionally, DNA-dependent RNA polymerase catalyzes the transcription of DNA into RNA using the four ribonucleoside triphosphates as substrates. The chain is DNA-directed RNA polymerase subunit beta' from Koribacter versatilis (strain Ellin345).